Here is a 481-residue protein sequence, read N- to C-terminus: 3-isopropylmalate dehydratase large subunit (481 aa).

Residues Cys363, Cys423, and Cys426 each coordinate [4Fe-4S] cluster. The tract at residues 434–465 (LRPGQRAASTSNRNFEGRQGRGGRTHLVSPPV) is disordered.

This sequence belongs to the aconitase/IPM isomerase family. LeuC type 1 subfamily. As to quaternary structure, heterodimer of LeuC and LeuD. It depends on [4Fe-4S] cluster as a cofactor.

It carries out the reaction (2R,3S)-3-isopropylmalate = (2S)-2-isopropylmalate. The protein operates within amino-acid biosynthesis; L-leucine biosynthesis; L-leucine from 3-methyl-2-oxobutanoate: step 2/4. Its function is as follows. Catalyzes the isomerization between 2-isopropylmalate and 3-isopropylmalate, via the formation of 2-isopropylmaleate. The polypeptide is 3-isopropylmalate dehydratase large subunit (Salinispora tropica (strain ATCC BAA-916 / DSM 44818 / JCM 13857 / NBRC 105044 / CNB-440)).